A 463-amino-acid polypeptide reads, in one-letter code: Probable cysteine protease RD21B (463 aa).

Positions 1–21 (MGFLKLSPMILLLAMIGVSYA) are cleaved as a signal peptide. Positions 22–137 (MDMSIISYDE…DRYQARVGDA (116 aa)) are cleaved as a propeptide — activation peptide. Asn92 carries an N-linked (GlcNAc...) asparagine glycan. Disulfide bonds link Cys159-Cys201, Cys193-Cys234, Cys292-Cys343, Cys376-Cys388, and Cys382-Cys403. Cys162 is a catalytic residue. Catalysis depends on residues His298 and Asn318. Positions 354–463 (KKGQNPPNPG…FWAKSRKHIA (110 aa)) are cleaved as a propeptide — removed in mature form. Asn415 carries N-linked (GlcNAc...) asparagine glycosylation.

Belongs to the peptidase C1 family. In terms of assembly, interacts with PRN2. Interacts with WSCP.

Functionally, probable thiol protease. This chain is Probable cysteine protease RD21B, found in Arabidopsis thaliana (Mouse-ear cress).